Reading from the N-terminus, the 629-residue chain is 1-deoxy-D-xylulose-5-phosphate synthase (629 aa).

Thiamine diphosphate contacts are provided by residues His79 and 119 to 121 (SHA). Mg(2+) is bound at residue Asp150. Residues 151 to 152 (GS), Asn180, Tyr292, and Glu377 each bind thiamine diphosphate. Asn180 contributes to the Mg(2+) binding site.

The protein belongs to the transketolase family. DXPS subfamily. In terms of assembly, homodimer. Mg(2+) is required as a cofactor. Thiamine diphosphate serves as cofactor.

The enzyme catalyses D-glyceraldehyde 3-phosphate + pyruvate + H(+) = 1-deoxy-D-xylulose 5-phosphate + CO2. It functions in the pathway metabolic intermediate biosynthesis; 1-deoxy-D-xylulose 5-phosphate biosynthesis; 1-deoxy-D-xylulose 5-phosphate from D-glyceraldehyde 3-phosphate and pyruvate: step 1/1. Catalyzes the acyloin condensation reaction between C atoms 2 and 3 of pyruvate and glyceraldehyde 3-phosphate to yield 1-deoxy-D-xylulose-5-phosphate (DXP). The polypeptide is 1-deoxy-D-xylulose-5-phosphate synthase (Tropheryma whipplei (strain TW08/27) (Whipple's bacillus)).